We begin with the raw amino-acid sequence, 28 residues long: Trypsin inhibitor 4 (28 aa).

Intrachain disulfides connect Cys-2–Cys-19, Cys-9–Cys-21, and Cys-15–Cys-27.

It belongs to the protease inhibitor I7 (squash-type serine protease inhibitor) family.

Its subcellular location is the secreted. Functionally, inhibits trypsin. This Luffa aegyptiaca (Sponge gourd) protein is Trypsin inhibitor 4.